The primary structure comprises 207 residues: Enolase (207 aa).

Glutamine 162 is a (2R)-2-phosphoglycerate binding site. The active-site Proton donor is the glutamate 204.

The protein belongs to the enolase family.

It localises to the cytoplasm. The protein localises to the secreted. It is found in the cell surface. The catalysed reaction is (2R)-2-phosphoglycerate = phosphoenolpyruvate + H2O. Its pathway is carbohydrate degradation; glycolysis; pyruvate from D-glyceraldehyde 3-phosphate: step 4/5. In terms of biological role, catalyzes the reversible conversion of 2-phosphoglycerate (2-PG) into phosphoenolpyruvate (PEP). It is essential for the degradation of carbohydrates via glycolysis. The protein is Enolase of Campylobacter fetus.